Reading from the N-terminus, the 273-residue chain is Flagellin FljK (273 aa).

It belongs to the bacterial flagellin family. As to quaternary structure, in C.crescentus, the flagellar filament is composed of multiple flagellins of 29 kDa; 27 kDa and 25 kDa.

Its subcellular location is the secreted. The protein resides in the bacterial flagellum. Flagellin is the subunit protein which polymerizes to form the filaments of bacterial flagella. The chain is Flagellin FljK (fljK) from Caulobacter vibrioides (strain ATCC 19089 / CIP 103742 / CB 15) (Caulobacter crescentus).